The chain runs to 77 residues: Putative defensin-like protein 129 (77 aa).

The N-terminal stretch at 1–25 (MTKNTALTIFMVVLVIEMVMEETQG) is a signal peptide. 4 disulfides stabilise this stretch: cysteine 28/cysteine 77, cysteine 37/cysteine 59, cysteine 42/cysteine 71, and cysteine 46/cysteine 73.

The protein belongs to the DEFL family.

Its subcellular location is the secreted. The sequence is that of Putative defensin-like protein 129 (LCR13) from Arabidopsis thaliana (Mouse-ear cress).